The chain runs to 543 residues: Protein lin-14 (543 aa).

Disordered stretches follow at residues 165 to 228 (PNGH…SSNH) and 268 to 291 (APAT…PRKP). The span at 177–213 (SMQTDEQQVKWSSPSSVDSNGQKTDSSAASAGDNQNI) shows a compositional bias: polar residues. Residues 268 to 282 (APATNGTTNGATKAA) show a composition bias toward low complexity.

Post-translationally, cleaved by caspase ced-3 in vitro.

The protein resides in the nucleus. Its function is as follows. Heterochronic protein which controls the choice of stage specific cell fates. Involved in the temporal progression of vulval fate patterning, possibly by inhibiting lin-12. Acts as a transcription factor involved in the stage-specific repression of insulin/insulin-like growth factor gene ins-33. The sequence is that of Protein lin-14 (lin-14) from Caenorhabditis briggsae.